A 339-amino-acid chain; its full sequence is Ribosomal RNA large subunit methyltransferase M (339 aa).

Residues Ser-176, Ala-206–Gly-209, Asp-225, Asp-245, and Asp-261 each bind S-adenosyl-L-methionine. Lys-290 acts as the Proton acceptor in catalysis.

It belongs to the class I-like SAM-binding methyltransferase superfamily. RNA methyltransferase RlmE family. RlmM subfamily. As to quaternary structure, monomer.

The protein resides in the cytoplasm. The catalysed reaction is cytidine(2498) in 23S rRNA + S-adenosyl-L-methionine = 2'-O-methylcytidine(2498) in 23S rRNA + S-adenosyl-L-homocysteine + H(+). Its function is as follows. Catalyzes the 2'-O-methylation at nucleotide C2498 in 23S rRNA. The protein is Ribosomal RNA large subunit methyltransferase M of Halorhodospira halophila (strain DSM 244 / SL1) (Ectothiorhodospira halophila (strain DSM 244 / SL1)).